The sequence spans 432 residues: Serine hydroxymethyltransferase (432 aa).

(6S)-5,6,7,8-tetrahydrofolate contacts are provided by residues leucine 117 and 121 to 123 (GHL). N6-(pyridoxal phosphate)lysine is present on lysine 226. 366–368 (SPF) contacts (6S)-5,6,7,8-tetrahydrofolate.

Belongs to the SHMT family. Homodimer. Pyridoxal 5'-phosphate serves as cofactor.

The protein localises to the cytoplasm. The enzyme catalyses (6R)-5,10-methylene-5,6,7,8-tetrahydrofolate + glycine + H2O = (6S)-5,6,7,8-tetrahydrofolate + L-serine. It functions in the pathway one-carbon metabolism; tetrahydrofolate interconversion. The protein operates within amino-acid biosynthesis; glycine biosynthesis; glycine from L-serine: step 1/1. Functionally, catalyzes the reversible interconversion of serine and glycine with tetrahydrofolate (THF) serving as the one-carbon carrier. This reaction serves as the major source of one-carbon groups required for the biosynthesis of purines, thymidylate, methionine, and other important biomolecules. Also exhibits THF-independent aldolase activity toward beta-hydroxyamino acids, producing glycine and aldehydes, via a retro-aldol mechanism. This Salinibacter ruber (strain DSM 13855 / M31) protein is Serine hydroxymethyltransferase.